Here is a 528-residue protein sequence, read N- to C-terminus: G protein-coupled receptor 161 (528 aa).

Residues 1-30 are Extracellular-facing; that stretch reads MSLNSSLGHRKELSNLTEGASDQGGSGVTE. N-linked (GlcNAc...) asparagine glycosylation is found at N4 and N15. A helical membrane pass occupies residues 31-51; that stretch reads FVAIVIITVFVCLGNLVIVIT. The Cytoplasmic portion of the chain corresponds to 52-64; it reads LYRKSYLLTLSNK. Residues 65-85 form a helical membrane-spanning segment; sequence FVFSLTLSNFLLSVLVLPFVV. At 86–101 the chain is on the extracellular side; sequence TSSIRREWIFGVVWCN. A disulfide bridge links C100 with C178. N-linked (GlcNAc...) asparagine glycosylation is present at N101. Residues 102-122 form a helical membrane-spanning segment; that stretch reads FSALLYLLISSASMLTLGIIA. Topologically, residues 123–143 are cytoplasmic; sequence VDRYYAVLYPMAYPMKITGNR. Residues 144–164 traverse the membrane as a helical segment; that stretch reads AVMVLAYIWLHSLIGCLPPLF. The Extracellular portion of the chain corresponds to 165-190; sequence GWSSVEFDEFKWMCVAAWHREPGYTA. A helical transmembrane segment spans residues 191-211; sequence FWQIWCALLPFLVMLVCYGFI. Over 212–269 the chain is Cytoplasmic; it reads FRVARVKARKVHCGAVVTVEVGVQRTGRKNSSTSTSSSGSRKSAFQGVVYSANQCKAL. A helical transmembrane segment spans residues 270-290; that stretch reads VTILVVIGAFMVTWGPYMVVI. The Extracellular segment spans residues 291–306; that stretch reads TSEALWGKNCVSPTLE. A helical membrane pass occupies residues 307–327; it reads TWATWLSFTSAICHPLIYGLW. The Cytoplasmic segment spans residues 328 to 528; sequence NKTVRKELLG…EGDVLATEQR (201 aa).

The protein belongs to the G-protein coupled receptor 1 family.

It is found in the cell projection. The protein localises to the cilium membrane. It localises to the cell membrane. Functionally, key negative regulator of Shh signaling, which promotes the processing of GLI3 into GLI3R during neural tube development. Recruited by TULP3 and the IFT-A complex to primary cilia and acts as a regulator of the PKA-dependent basal repression machinery in Shh signaling by increasing cAMP levels, leading to promote the PKA-dependent processing of GLI3 into GLI3R and repress the Shh signaling. In presence of SHH, it is removed from primary cilia and is internalized into recycling endosomes, preventing its activity and allowing activation of the Shh signaling. Its ligand is unknown. The polypeptide is G protein-coupled receptor 161 (GPR161) (Bos taurus (Bovine)).